Reading from the N-terminus, the 301-residue chain is Lipoyl synthase (301 aa).

Residues cysteine 53, cysteine 58, cysteine 64, cysteine 79, cysteine 83, cysteine 86, and serine 290 each coordinate [4Fe-4S] cluster. One can recognise a Radical SAM core domain in the interval 65–279 (WSRKTATYML…RIYGKSIGFK (215 aa)).

The protein belongs to the radical SAM superfamily. Lipoyl synthase family. It depends on [4Fe-4S] cluster as a cofactor.

Its subcellular location is the cytoplasm. The catalysed reaction is [[Fe-S] cluster scaffold protein carrying a second [4Fe-4S](2+) cluster] + N(6)-octanoyl-L-lysyl-[protein] + 2 oxidized [2Fe-2S]-[ferredoxin] + 2 S-adenosyl-L-methionine + 4 H(+) = [[Fe-S] cluster scaffold protein] + N(6)-[(R)-dihydrolipoyl]-L-lysyl-[protein] + 4 Fe(3+) + 2 hydrogen sulfide + 2 5'-deoxyadenosine + 2 L-methionine + 2 reduced [2Fe-2S]-[ferredoxin]. It participates in protein modification; protein lipoylation via endogenous pathway; protein N(6)-(lipoyl)lysine from octanoyl-[acyl-carrier-protein]: step 2/2. Catalyzes the radical-mediated insertion of two sulfur atoms into the C-6 and C-8 positions of the octanoyl moiety bound to the lipoyl domains of lipoate-dependent enzymes, thereby converting the octanoylated domains into lipoylated derivatives. This is Lipoyl synthase from Leptospira interrogans serogroup Icterohaemorrhagiae serovar Lai (strain 56601).